The chain runs to 82 residues: MGSLSIWHWLIVGAVVLLVFGGKGKISDIMGDVAKGIKSFKRGLSEDEEKAEAKPVGEPSLRSLDHQGAGDPLKTPDARKIG.

The helical transmembrane segment at 1–21 (MGSLSIWHWLIVGAVVLLVFG) threads the bilayer. The interval 43–82 (GLSEDEEKAEAKPVGEPSLRSLDHQGAGDPLKTPDARKIG) is disordered.

Belongs to the TatA/E family. As to quaternary structure, the Tat system comprises two distinct complexes: a TatABC complex, containing multiple copies of TatA, TatB and TatC subunits, and a separate TatA complex, containing only TatA subunits. Substrates initially bind to the TatABC complex, which probably triggers association of the separate TatA complex to form the active translocon.

It is found in the cell inner membrane. Its function is as follows. Part of the twin-arginine translocation (Tat) system that transports large folded proteins containing a characteristic twin-arginine motif in their signal peptide across membranes. TatA could form the protein-conducting channel of the Tat system. This is Sec-independent protein translocase protein TatA from Methylocella silvestris (strain DSM 15510 / CIP 108128 / LMG 27833 / NCIMB 13906 / BL2).